Here is a 470-residue protein sequence, read N- to C-terminus: Protein THP3 (470 aa).

Met-1 carries the post-translational modification N-acetylmethionine. Polar residues-rich tracts occupy residues 1 to 12 (MQNPYGHFTNNT), 19 to 30 (SSQGGPFGQSLN), and 154 to 165 (QGPSATTNSNDN). Disordered stretches follow at residues 1-31 (MQNP…SLNR) and 137-167 (GGSD…DNLN). The 175-residue stretch at 276–450 (DLGEFNQCQN…NIKILNTKGC (175 aa)) folds into the PCI domain.

It belongs to the THP3 family. Interacts with CSN12 and SEM1.

The protein resides in the nucleus. Forms a complex with CSN12 that is recruited to transcribed genes and required for transcription elongation. May also be involved in pre-mRNA splicing. The sequence is that of Protein THP3 (THP3) from Saccharomyces cerevisiae (strain ATCC 204508 / S288c) (Baker's yeast).